The following is a 210-amino-acid chain: Large ribosomal subunit protein bL17 (210 aa).

A disordered region spans residues 177–210 (TRSAQRPAFEQDAPESDSAPEAEAKTEEETASAN).

Belongs to the bacterial ribosomal protein bL17 family. As to quaternary structure, part of the 50S ribosomal subunit. Contacts protein L32.

The polypeptide is Large ribosomal subunit protein bL17 (Rhodopirellula baltica (strain DSM 10527 / NCIMB 13988 / SH1)).